Here is an 859-residue protein sequence, read N- to C-terminus: Leucine--tRNA ligase (859 aa).

The 'HIGH' region signature appears at 42 to 52 (PYPSGRLHMGH). The 'KMSKS' region signature appears at 618 to 622 (KMSKS). Lys621 lines the ATP pocket.

It belongs to the class-I aminoacyl-tRNA synthetase family.

Its subcellular location is the cytoplasm. The catalysed reaction is tRNA(Leu) + L-leucine + ATP = L-leucyl-tRNA(Leu) + AMP + diphosphate. The chain is Leucine--tRNA ligase from Shewanella baltica (strain OS195).